The primary structure comprises 63 residues: UPF0337 protein RA1131 (63 aa).

Residues 1-63 (MGSAKDKVAG…DAVKGAVDKT (63 aa)) form a disordered region. The segment covering 34–49 (AKGAAQEAKGGAQQAK) has biased composition (low complexity). Over residues 51–63 (KLKDAVKGAVDKT) the composition is skewed to basic and acidic residues.

Belongs to the UPF0337 (CsbD) family.

In Rhizobium meliloti (strain 1021) (Ensifer meliloti), this protein is UPF0337 protein RA1131.